Here is a 632-residue protein sequence, read N- to C-terminus: Thioredoxin domain-containing protein C959.05c (632 aa).

An N-terminal signal peptide occupies residues Met1–Ala22. Asn35, Asn41, and Asn140 each carry an N-linked (GlcNAc...) asparagine glycan. The 132-residue stretch at Ser153–Ser284 folds into the Thioredoxin domain. Cys209 and Cys212 are oxidised to a cystine. Asn557 is a glycosylation site (N-linked (GlcNAc...) asparagine). Residues Leu583 to Ala603 traverse the membrane as a helical segment.

It belongs to the protein disulfide isomerase family.

It localises to the endoplasmic reticulum membrane. The enzyme catalyses Catalyzes the rearrangement of -S-S- bonds in proteins.. In terms of biological role, acts as a membrane-bound chaperone in endoplasmic reticulum quality control. Probably facilitates presentation of substrate to membrane-bound components of the degradation machinery. The chain is Thioredoxin domain-containing protein C959.05c from Schizosaccharomyces pombe (strain 972 / ATCC 24843) (Fission yeast).